We begin with the raw amino-acid sequence, 285 residues long: tRNA-cytidine(32) 2-sulfurtransferase (285 aa).

The PP-loop motif signature appears at 49 to 54 (SGGKDS). [4Fe-4S] cluster-binding residues include C124, C127, and C215.

This sequence belongs to the TtcA family. In terms of assembly, homodimer. Mg(2+) serves as cofactor. It depends on [4Fe-4S] cluster as a cofactor.

It localises to the cytoplasm. The enzyme catalyses cytidine(32) in tRNA + S-sulfanyl-L-cysteinyl-[cysteine desulfurase] + AH2 + ATP = 2-thiocytidine(32) in tRNA + L-cysteinyl-[cysteine desulfurase] + A + AMP + diphosphate + H(+). It functions in the pathway tRNA modification. Catalyzes the ATP-dependent 2-thiolation of cytidine in position 32 of tRNA, to form 2-thiocytidine (s(2)C32). The sulfur atoms are provided by the cysteine/cysteine desulfurase (IscS) system. In Hahella chejuensis (strain KCTC 2396), this protein is tRNA-cytidine(32) 2-sulfurtransferase.